A 336-amino-acid chain; its full sequence is Potassium channel subfamily K member 1 (336 aa).

The Cytoplasmic portion of the chain corresponds to 1–20; it reads MLQSLAGSSCVRLVERHRSA. A helical membrane pass occupies residues 21–41; it reads RCFGFLVLGYLLYLVFGAVVF. Residues 42–103 are Extracellular-facing; sequence SSVELPYEDL…SNASGNWNWD (62 aa). N95 carries N-linked (GlcNAc...) asparagine glycosylation. The segment at residues 104-116 is an intramembrane region (helical); sequence FTSALFFASTVLS. An intramembrane segment occupies 117–122; sequence TTGYGH. A selectivity filter 1 region spans residues 117-122; the sequence is TTGYGH. Topologically, residues 123–132 are extracellular; the sequence is TVPLSDGGKA. The chain crosses the membrane as a helical span at residues 133-156; it reads FCIIYSVIGIPFTLLFLTAVVQRI. Residues 157–181 are Cytoplasmic-facing; that stretch reads TVHVTRRPVLYFHIRWGFSKQVVAI. A helical transmembrane segment spans residues 182-202; the sequence is VHAVLLGFVTVSCFFFIPAAV. The Extracellular portion of the chain corresponds to 203 to 211; sequence FSVLEDDWN. Positions 212-224 form an intramembrane region, helical; that stretch reads FLESFYFCFISLS. A selectivity filter 2 region spans residues 225–230; sequence TIGLGD. An intramembrane segment occupies 225 to 231; it reads TIGLGDY. Topologically, residues 232–243 are extracellular; that stretch reads VPGEGYNQKFRE. The helical transmembrane segment at 244–267 threads the bilayer; sequence LYKIGITCYLLLGLIAMLVVLETF. Topologically, residues 268–336 are cytoplasmic; the sequence is CELHELKKFR…SACMDGPANH (69 aa). A Glycyl lysine isopeptide (Lys-Gly) (interchain with G-Cter in SUMO) cross-link involves residue K274. Residues 293–299 are important for intracellular retention in recycling endosomes; that stretch reads IIEHDQL. A disordered region spans residues 315 to 336; it reads QKQNEPFVATQSSACMDGPANH. Position 326 is a phosphoserine (S326).

The protein belongs to the two pore domain potassium channel (TC 1.A.1.8) family. Homodimer; disulfide-linked. Heterodimer with KCNK2; disulfide-linked. In astrocytes, forms mostly heterodimeric potassium channels with KCNK2, with only a minor proportion of functional channels containing homodimeric KCNK1. Interacts with KCNK3 and KCNK9, forming functional heterodimeric channels. Interacts with GNG4. Identified in a complex with PSD and ARF6; interacts only with PSD that is bound to ARF6. Interacts with UBE2I. Sumoylation is controversial. Sumoylated by UBE2I. Not sumoylated when expressed in xenopus oocytes or mammalian cells. Sumoylation inactivates the channel, but does not interfere with expression at the cell membrane. Sumoylation of a single subunit is sufficient to silence the dimeric channel. Sumoylation of KCNK1 is sufficient to silence heterodimeric channels formed by KCNK1 and KCNK3 or KCNK9. Desumoylated by SENP1; this activates the channel. Desumoylated by SENP1; this strongly increases halothane-mediated activation of heterodimeric channels formed with KCNK9. SENP1 treatment has no effect.

It localises to the cell membrane. It is found in the recycling endosome. The protein resides in the synaptic cell membrane. The protein localises to the cytoplasmic vesicle. Its subcellular location is the perikaryon. It localises to the cell projection. It is found in the dendrite. The protein resides in the apical cell membrane. It catalyses the reaction K(+)(in) = K(+)(out). The enzyme catalyses NH4(+)(in) = NH4(+)(out). It carries out the reaction Na(+)(in) = Na(+)(out). The catalysed reaction is Rb(+)(in) = Rb(+)(out). It catalyses the reaction Cs(+)(in) = Cs(+)(out). The enzyme catalyses Li(+)(in) = Li(+)(out). It carries out the reaction L-glutamate(out) = L-glutamate(in). The catalysed reaction is chloride(in) = chloride(out). Functionally, ion channel that contributes to passive transmembrane potassium transport and to the regulation of the resting membrane potential in brain astrocytes, but also in kidney and in other tissues. Forms dimeric channels through which potassium ions pass in accordance with their electrochemical gradient. The channel is selective for K(+) ions at physiological potassium concentrations and at neutral pH, but becomes permeable to Na(+) at subphysiological K(+) levels, and upon acidification of the extracellular medium. The homodimer has very low potassium channel activity, when expressed in heterologous systems, and can function as weakly inward rectifying potassium channel. Channel activity is modulated by activation of serotonin receptors. Heterodimeric channels containing KCNK1 and KCNK2 have much higher activity, and may represent the predominant form in astrocytes. Heterodimeric channels containing KCNK1 and KCNK3 or KCNK9 have much higher activity. Heterodimeric channels formed by KCNK1 and KCNK9 may contribute to halothane-sensitive currents. Mediates outward rectifying potassium currents in dentate gyrus granule cells and contributes to the regulation of their resting membrane potential. Contributes to the regulation of action potential firing in dentate gyrus granule cells and down-regulates their intrinsic excitability. In astrocytes, the heterodimer formed by KCNK1 and KCNK2 is required for rapid glutamate release in response to activation of G-protein coupled receptors, such as F2R and CNR1. Required for normal ion and water transport in the kidney. Contributes to the regulation of the resting membrane potential of pancreatic beta cells. The low channel activity of homodimeric KCNK1 may be due to sumoylation. The low channel activity may be due to rapid internalization from the cell membrane and retention in recycling endosomes. Permeable to monovalent cations with ion selectivity for K(+) &gt; Rb(+) &gt;&gt; NH4(+) &gt;&gt; Cs(+) = Na(+) = Li(+). The chain is Potassium channel subfamily K member 1 from Pongo abelii (Sumatran orangutan).